Reading from the N-terminus, the 428-residue chain is Glutamate-1-semialdehyde 2,1-aminomutase 1 (428 aa).

Position 268 is an N6-(pyridoxal phosphate)lysine (Lys-268).

The protein belongs to the class-III pyridoxal-phosphate-dependent aminotransferase family. HemL subfamily. Homodimer. It depends on pyridoxal 5'-phosphate as a cofactor.

The protein resides in the cytoplasm. It carries out the reaction (S)-4-amino-5-oxopentanoate = 5-aminolevulinate. It participates in porphyrin-containing compound metabolism; protoporphyrin-IX biosynthesis; 5-aminolevulinate from L-glutamyl-tRNA(Glu): step 2/2. This chain is Glutamate-1-semialdehyde 2,1-aminomutase 1, found in Bacillus cereus (strain G9842).